The primary structure comprises 889 residues: Translation initiation factor IF-2 (889 aa).

The tract at residues 1 to 299 (MTDNKDDKTL…EKFKRSQMQE (299 aa)) is disordered. A compositionally biased stretch (low complexity) spans 61 to 76 (ITPVAATPAARPAEQR). Positions 77–93 (PMPPQPSGRPAPQPQPH) are enriched in pro residues. Residues 116 to 182 (MEARRRALAE…EAEKTEEKVE (67 aa)) show a composition bias toward basic and acidic residues. Positions 196 to 215 (RPQPGRAAPAATPAAPDGAA) are enriched in low complexity. Basic and acidic residues predominate over residues 220 to 231 (RGTESEEDERRR). A tr-type G domain is found at 387 to 554 (SRPPIVTIMG…AILLQSEILD (168 aa)). Residues 396-403 (GHVDHGKT) are G1. GTP is bound at residue 396–403 (GHVDHGKT). A G2 region spans residues 421–425 (GITQH). The segment at 442-445 (DTPG) is G3. GTP-binding positions include 442-446 (DTPGH) and 496-499 (NKID). Residues 496-499 (NKID) are G4. The segment at 532-534 (SAK) is G5.

Belongs to the TRAFAC class translation factor GTPase superfamily. Classic translation factor GTPase family. IF-2 subfamily.

Its subcellular location is the cytoplasm. In terms of biological role, one of the essential components for the initiation of protein synthesis. Protects formylmethionyl-tRNA from spontaneous hydrolysis and promotes its binding to the 30S ribosomal subunits. Also involved in the hydrolysis of GTP during the formation of the 70S ribosomal complex. This is Translation initiation factor IF-2 from Rhizobium meliloti (strain 1021) (Ensifer meliloti).